The primary structure comprises 326 residues: Pyruvate dehydrogenase E1 component subunit alpha (326 aa).

Heterodimer of an alpha and a beta chain. Thiamine diphosphate is required as a cofactor.

The catalysed reaction is N(6)-[(R)-lipoyl]-L-lysyl-[protein] + pyruvate + H(+) = N(6)-[(R)-S(8)-acetyldihydrolipoyl]-L-lysyl-[protein] + CO2. The pyruvate dehydrogenase complex catalyzes the overall conversion of pyruvate to acetyl-CoA and CO(2). It contains multiple copies of three enzymatic components: pyruvate dehydrogenase (E1), dihydrolipoamide acetyltransferase (E2) and lipoamide dehydrogenase (E3). This is Pyruvate dehydrogenase E1 component subunit alpha (pdhA) from Rickettsia typhi (strain ATCC VR-144 / Wilmington).